Consider the following 245-residue polypeptide: 1-(5-phosphoribosyl)-5-[(5-phosphoribosylamino)methylideneamino] imidazole-4-carboxamide isomerase 1 (245 aa).

Aspartate 7 acts as the Proton acceptor in catalysis. Aspartate 129 acts as the Proton donor in catalysis.

This sequence belongs to the HisA/HisF family.

It localises to the cytoplasm. It carries out the reaction 1-(5-phospho-beta-D-ribosyl)-5-[(5-phospho-beta-D-ribosylamino)methylideneamino]imidazole-4-carboxamide = 5-[(5-phospho-1-deoxy-D-ribulos-1-ylimino)methylamino]-1-(5-phospho-beta-D-ribosyl)imidazole-4-carboxamide. It participates in amino-acid biosynthesis; L-histidine biosynthesis; L-histidine from 5-phospho-alpha-D-ribose 1-diphosphate: step 4/9. In Photorhabdus laumondii subsp. laumondii (strain DSM 15139 / CIP 105565 / TT01) (Photorhabdus luminescens subsp. laumondii), this protein is 1-(5-phosphoribosyl)-5-[(5-phosphoribosylamino)methylideneamino] imidazole-4-carboxamide isomerase 1 (hisA1).